The chain runs to 229 residues: Acetylornithine aminotransferase (229 aa).

Pyridoxal 5'-phosphate-binding positions include 95–96 (GA) and phenylalanine 122. Arginine 125 lines the N(2)-acetyl-L-ornithine pocket. Residue 208 to 211 (DEIQ) participates in pyridoxal 5'-phosphate binding.

Belongs to the class-III pyridoxal-phosphate-dependent aminotransferase family. ArgD subfamily. As to quaternary structure, homodimer. Pyridoxal 5'-phosphate is required as a cofactor.

It localises to the cytoplasm. It catalyses the reaction N(2)-acetyl-L-ornithine + 2-oxoglutarate = N-acetyl-L-glutamate 5-semialdehyde + L-glutamate. Its pathway is amino-acid biosynthesis; L-arginine biosynthesis; N(2)-acetyl-L-ornithine from L-glutamate: step 4/4. In Bacillus amyloliquefaciens (Bacillus velezensis), this protein is Acetylornithine aminotransferase (argD).